Reading from the N-terminus, the 411-residue chain is MTLLVTNIKELLQVREQNILKVSGSEMKELPTIKNAWLLIENDKIADFGTMKNMPKITADQTIDATGKIVLPTWCDSHTHIVYAGNREQEFADRINGLSYEEIANRGGGILNSVKTLQDTSEEEVYEQSAKRLKEVMKLGTGAVEIKSGYGLTEKAELKMLRVIKKLRENYDLPVKSTFLGAHAIPKEYKNDPDAYMDLVINEILPKVAKEGLAEYIDIFCEKGYFSIKDTHRLLSAAKEHGLKPKIHVNQFNSIGGVKVGVEHEALSVDHLEVMNDEDIEVLKGTRTMPVALPSCSLFLSIPYTPARKILDAELPLALATDFNPGSTPSGNMNLVVSLACIKMKMTPEEAINAATINGAYAMDLSETHGSITKGKMANFMITKEIPSFTFLPYAFGTNSIDSVYINGKLI.

Positions 78 and 80 each coordinate Fe(3+). Residues His-78 and His-80 each contribute to the Zn(2+) site. 4-imidazolone-5-propanoate contacts are provided by Arg-87, Tyr-150, and His-183. N-formimidoyl-L-glutamate is bound at residue Tyr-150. His-248 serves as a coordination point for Fe(3+). A Zn(2+)-binding site is contributed by His-248. Gln-251 provides a ligand contact to 4-imidazolone-5-propanoate. Asp-322 contacts Fe(3+). Asp-322 provides a ligand contact to Zn(2+). Residues Asn-324 and Gly-326 each contribute to the N-formimidoyl-L-glutamate site. Ser-327 is a 4-imidazolone-5-propanoate binding site.

This sequence belongs to the metallo-dependent hydrolases superfamily. HutI family. Zn(2+) is required as a cofactor. Fe(3+) serves as cofactor.

The protein localises to the cytoplasm. The enzyme catalyses 4-imidazolone-5-propanoate + H2O = N-formimidoyl-L-glutamate. It participates in amino-acid degradation; L-histidine degradation into L-glutamate; N-formimidoyl-L-glutamate from L-histidine: step 3/3. In terms of biological role, catalyzes the hydrolytic cleavage of the carbon-nitrogen bond in imidazolone-5-propanoate to yield N-formimidoyl-L-glutamate. It is the third step in the universal histidine degradation pathway. The polypeptide is Imidazolonepropionase (Christiangramia forsetii (strain DSM 17595 / CGMCC 1.15422 / KT0803) (Gramella forsetii)).